Consider the following 418-residue polypeptide: Creatine kinase U-type, mitochondrial (418 aa).

The transit peptide at 1–39 (MAGPFSRLLSARPGLRLLALAGAGSLTAGILLRPESVGA) directs the protein to the mitochondrion. The interval 40–64 (AAAERRRLYPPSAEYPDLRKHNNCM) is cardiolipin-binding. The region spanning 46–132 (RLYPPSAEYP…FDPVIQERHN (87 aa)) is the Phosphagen kinase N-terminal domain. Ser152 is subject to Phosphoserine. The 243-residue stretch at 159-401 (YVLSSRVRTG…NYLIDCERRL (243 aa)) folds into the Phosphagen kinase C-terminal domain. Position 162 to 166 (162 to 166 (SSRVR)) interacts with ATP. Ser197 is subject to Phosphoserine. Position 214 is a phosphothreonine (Thr214). An ATP-binding site is contributed by His225. Ser233 is subject to Phosphoserine. ATP contacts are provided by residues Arg270, Arg326, and 354–359 (RGTGGV). Position 356 is a phosphothreonine (Thr356). Position 366 is a phosphoserine (Ser366). Asp369 serves as a coordination point for ATP.

Belongs to the ATP:guanido phosphotransferase family. Exists as an octamer composed of four MTCK homodimers.

The protein localises to the mitochondrion inner membrane. The catalysed reaction is creatine + ATP = N-phosphocreatine + ADP + H(+). In terms of biological role, reversibly catalyzes the transfer of phosphate between ATP and various phosphogens (e.g. creatine phosphate). Creatine kinase isoenzymes play a central role in energy transduction in tissues with large, fluctuating energy demands, such as skeletal muscle, heart, brain and spermatozoa. The polypeptide is Creatine kinase U-type, mitochondrial (Ckmt1) (Mus musculus (Mouse)).